The sequence spans 288 residues: Bifunctional protein FolD 1 (288 aa).

NADP(+)-binding positions include 170–172 and Ile-236; that span reads GPG.

This sequence belongs to the tetrahydrofolate dehydrogenase/cyclohydrolase family. As to quaternary structure, homodimer.

The catalysed reaction is (6R)-5,10-methylene-5,6,7,8-tetrahydrofolate + NADP(+) = (6R)-5,10-methenyltetrahydrofolate + NADPH. It carries out the reaction (6R)-5,10-methenyltetrahydrofolate + H2O = (6R)-10-formyltetrahydrofolate + H(+). It functions in the pathway one-carbon metabolism; tetrahydrofolate interconversion. Its function is as follows. Catalyzes the oxidation of 5,10-methylenetetrahydrofolate to 5,10-methenyltetrahydrofolate and then the hydrolysis of 5,10-methenyltetrahydrofolate to 10-formyltetrahydrofolate. The polypeptide is Bifunctional protein FolD 1 (Deinococcus geothermalis (strain DSM 11300 / CIP 105573 / AG-3a)).